The chain runs to 1183 residues: MFKLKNFEAIKIGLASPEKIREWSRGEVKKPETINYRTLKPERDGLFCERIFGPTKDWECHCGKYKRVKYKGVVCDRCGVEVTRSKVRRERMGHIELAAPVAHIWYVKGIPSRMGLLLDMSPRALEKVLYFVSYVVIDPGDTPLTKKQLLSEKEYREYLEKYGNRFRAGMGAEAIKELLQEIDLEKLSKELRAEIKESTGQKRVRAIRRLEVVQAFIDSGNRPEWMILEVLPVIPPDLRPMVQLDGGRFATSDLNDLYRRVINRNNRLKKLLDLGAPDIIVRNEKRMLQEAVDALIDNGRRGRPVTGPGNRPLKSLSDMLKGKQGRFRQNLLGKRVDYSGRSVIVVGPELKVYQCGLPKEMALELFKPFVMKRLVDKGLAQHIKSAKRMVERVRPEVWDVLEEVIKEHPVLLNRAPTLHRLGIQAFEPVLVEGRAIKLHPLVCPAYNADFDGDQMAVHIPLSMEAQAEARFLMLAANNILKPQDGKPVMTPTQDMVLGCYYLTADEDGVPGEGKYFSSPEEALMAYQLGYIHIHAKIKVKMTREINGEKKSKVIETTVGKIIFNEAIPQDLGFVDRNNPETAFNLEINDLVDKSKLGKILDRVYRIHGPTKTAETLDKIKELGFKYSTKAAITISVSDMVIPKEKEKLLKEADEMVAKIEAQFRRGLISEEERYEKVIETWNMTTEKVTEALMATLDKFNPIFMMAHSGARGSKNQIRQLAGMRGLMADPSGRIIELPIRSNFREGLNVLEFFISTHGARKGLADTALRTADSGYLTRRLVDVSQDVIVREEDCGTDEGIYVEEIREGNEIIEKLSDRIIGRIAAEDIVDSEGNVIVRRNEMINEEEAEKIDKAGITRVKIRSPLTCRSRHGVCRMCYGRDLATGELVNIGEAVGIIAAQAIGEPGTQLTMRTFHTGGVAGVDITQGLPRVEELFEARKPKGLAVITEISGVVRINESKKRREITVVDEENNISKTYLIPYGSRLKVRDGQWVQAGDELTEGSVNPHDLLKIKGIYAVQSYLLQEVQKVYRLQGVEINDKHIEIIIRQMMKKVKVEDPGDTSMLPGELIDMFKFEEENKKAIEKGLRPATGRRALLGITKAALATDSFLSAASFQETTRVLTDAAIKGKVDPLIGLKENVIIGKLIPAGTGLSRYRNITVVKKEDQEKKEEVKKEAVDAKASS.

Zn(2+) contacts are provided by Cys-60, Cys-62, Cys-75, and Cys-78. Mg(2+)-binding residues include Asp-449, Asp-451, and Asp-453. Cys-794, Cys-867, Cys-874, and Cys-877 together coordinate Zn(2+).

This sequence belongs to the RNA polymerase beta' chain family. As to quaternary structure, the RNAP catalytic core consists of 2 alpha, 1 beta, 1 beta' and 1 omega subunit. When a sigma factor is associated with the core the holoenzyme is formed, which can initiate transcription. Mg(2+) serves as cofactor. Zn(2+) is required as a cofactor.

It carries out the reaction RNA(n) + a ribonucleoside 5'-triphosphate = RNA(n+1) + diphosphate. DNA-dependent RNA polymerase catalyzes the transcription of DNA into RNA using the four ribonucleoside triphosphates as substrates. This Caldanaerobacter subterraneus subsp. tengcongensis (strain DSM 15242 / JCM 11007 / NBRC 100824 / MB4) (Thermoanaerobacter tengcongensis) protein is DNA-directed RNA polymerase subunit beta'.